The primary structure comprises 469 residues: MSTSHAAHPDRLLPADPATRDIARRLLTYVEDLPIISPHGHLEASMFVKDEPFADPTTLLISPDHYLTRVLHSAGVDLADLRVGGTEGKTPREAWRIFASNWDLYTGTATGYWVEQEFEHVFGINPDRLSAENADDIYDELSEILARPDFRPRALAEQFNLEILATTDDPLDDLADHKALAQDPTFSPRVLPTFRPDAYTKMYNPGWAEKTTRLIDVAGDGKAGWEGYLQAMRNRRQYFIDHGATSADHGTHDTDTTPLSHEDAQRILDKGLAGTATLAEMRAFEANTTYRFAEMCQDDGLVMTLHPGVYRNHSASAQKKFGNDIGADIPFQLEYTRGLRPLLSDFGENKDFHFVMFTIDETVFSREVAPLAGYYPAAYVGAPWWFIDEIDAMNRFRSLTTGTTGFSRYSGFIDDTRAYCSIPARHNTSRRVEANYLARLVAEHRISETRASEIIVDLIDASPRRVFKL.

Belongs to the metallo-dependent hydrolases superfamily. Uronate isomerase family.

It carries out the reaction D-glucuronate = D-fructuronate. The catalysed reaction is aldehydo-D-galacturonate = keto-D-tagaturonate. It participates in carbohydrate metabolism; pentose and glucuronate interconversion. This chain is Uronate isomerase, found in Corynebacterium efficiens (strain DSM 44549 / YS-314 / AJ 12310 / JCM 11189 / NBRC 100395).